The chain runs to 149 residues: Flagellar basal-body protein FlbY (149 aa).

The basal body constitutes a major portion of the flagellar organelle and consists of five rings (E,L,P,S, and M) mounted on a central rod.

Its subcellular location is the bacterial flagellum basal body. The polypeptide is Flagellar basal-body protein FlbY (flbY) (Caulobacter vibrioides (strain ATCC 19089 / CIP 103742 / CB 15) (Caulobacter crescentus)).